The primary structure comprises 387 residues: Large ribosomal subunit protein uL3 (387 aa).

It belongs to the universal ribosomal protein uL3 family.

The protein localises to the cytoplasm. The sequence is that of Large ribosomal subunit protein uL3 (RPL3) from Eremothecium gossypii (strain ATCC 10895 / CBS 109.51 / FGSC 9923 / NRRL Y-1056) (Yeast).